Consider the following 219-residue polypeptide: ATP-dependent Clp protease proteolytic subunit 4 (219 aa).

Ser-125 functions as the Nucleophile in the catalytic mechanism. His-150 is an active-site residue.

The protein belongs to the peptidase S14 family. As to quaternary structure, fourteen ClpP subunits assemble into 2 heptameric rings which stack back to back to give a disk-like structure with a central cavity, resembling the structure of eukaryotic proteasomes.

The protein localises to the cytoplasm. It catalyses the reaction Hydrolysis of proteins to small peptides in the presence of ATP and magnesium. alpha-casein is the usual test substrate. In the absence of ATP, only oligopeptides shorter than five residues are hydrolyzed (such as succinyl-Leu-Tyr-|-NHMec, and Leu-Tyr-Leu-|-Tyr-Trp, in which cleavage of the -Tyr-|-Leu- and -Tyr-|-Trp bonds also occurs).. Functionally, cleaves peptides in various proteins in a process that requires ATP hydrolysis. Has a chymotrypsin-like activity. Plays a major role in the degradation of misfolded proteins. This Prochlorococcus marinus (strain MIT 9312) protein is ATP-dependent Clp protease proteolytic subunit 4.